Here is a 320-residue protein sequence, read N- to C-terminus: Rhomboid-like protein 17, chloroplastic (320 aa).

Residues 1-87 (MHAIFSSFSR…LKFGNVMESR (87 aa)) constitute a chloroplast transit peptide. 5 helical membrane passes run 116–136 (WINGANGVVFGLVIANAAVFT), 160–180 (LITSGFSHIGTSQIILNMIGI), 199–219 (LYFAGALGGSVCFLSYHALLA), 247–267 (MFAIALLDMFIYPKVTTYFAL), and 295–315 (IASSSGQLGGVVVAAMAWARI).

It belongs to the peptidase S54 family.

It localises to the plastid. The protein resides in the chloroplast membrane. Probable rhomboid-type serine protease that catalyzes intramembrane proteolysis. The sequence is that of Rhomboid-like protein 17, chloroplastic from Arabidopsis thaliana (Mouse-ear cress).